A 282-amino-acid chain; its full sequence is Aldo-keto reductase MUL_1987 (282 aa).

Residue Y57 is the Proton donor of the active site. The NADPH site is built by L197, I235, S238, T246, N247, and R273.

This sequence belongs to the aldo/keto reductase family.

This is Aldo-keto reductase MUL_1987 from Mycobacterium ulcerans (strain Agy99).